Reading from the N-terminus, the 311-residue chain is MKVAVLGAAGGIGQALALLLKNRLPAGSELSLYDIAPVTPGVAVDLSHIPTDVKVKGFCGEDPSPALVGADVVLISAGVARKPGMDRSDLFNINPGIVKNLVEKCAASCPKALIGIITNPVNTTVAIAAEVLKKAGVYDKRRLFGVTTLDVIRAETFVADAKGLNVDKVRVNVIGGHSGVTILPLLSQIEGASFSAEEVAAMTKRIQNAGTEVVEAKAGGGSATLSMGQAACRFGLSLIKGLQGEANVIECAYVEGDGKHATFFAQPILLGKNGVETVLDYGKLSAFEQEAMEGMLATLKADIQLGVEFVK.

Residues Gly7–Gly13 and Asp34 contribute to the NAD(+) site. Substrate-binding residues include Arg81 and Arg87. NAD(+) contacts are provided by residues Asn94 and Ile117–Asn119. Substrate contacts are provided by Asn119 and Arg153. Residue His177 is the Proton acceptor of the active site. Met227 is an NAD(+) binding site.

Belongs to the LDH/MDH superfamily. MDH type 1 family. As to quaternary structure, homodimer.

It catalyses the reaction (S)-malate + NAD(+) = oxaloacetate + NADH + H(+). Catalyzes the reversible oxidation of malate to oxaloacetate. The chain is Malate dehydrogenase from Aeromonas salmonicida (strain A449).